A 640-amino-acid chain; its full sequence is UvrABC system protein C (640 aa).

Residues 35 to 113 (DAPGVYRMIG…IKQLKPRFNV (79 aa)) enclose the GIY-YIG domain. The UVR domain occupies 223-258 (RAVMATMAKAMEEAAEELEFERAARLRDRIRALSAV).

It belongs to the UvrC family. Interacts with UvrB in an incision complex.

Its subcellular location is the cytoplasm. In terms of biological role, the UvrABC repair system catalyzes the recognition and processing of DNA lesions. UvrC both incises the 5' and 3' sides of the lesion. The N-terminal half is responsible for the 3' incision and the C-terminal half is responsible for the 5' incision. The sequence is that of UvrABC system protein C from Caulobacter vibrioides (strain ATCC 19089 / CIP 103742 / CB 15) (Caulobacter crescentus).